We begin with the raw amino-acid sequence, 457 residues long: Bifunctional protein GlmU (457 aa).

The segment at methionine 1–arginine 230 is pyrophosphorylase. UDP-N-acetyl-alpha-D-glucosamine contacts are provided by residues leucine 7–glycine 10, lysine 21, glutamine 73, glycine 78–threonine 79, tyrosine 104–aspartate 106, glycine 140, glutamate 155, asparagine 170, and asparagine 228. Residue aspartate 106 participates in Mg(2+) binding. Asparagine 228 lines the Mg(2+) pocket. The segment at valine 231–alanine 251 is linker. The tract at residues glycine 252 to serine 457 is N-acetyltransferase. The UDP-N-acetyl-alpha-D-glucosamine site is built by arginine 334 and lysine 352. Catalysis depends on histidine 364, which acts as the Proton acceptor. Tyrosine 367 and asparagine 378 together coordinate UDP-N-acetyl-alpha-D-glucosamine. Acetyl-CoA-binding positions include alanine 381, asparagine 387 to tyrosine 388, serine 406, alanine 424, and arginine 441.

The protein in the N-terminal section; belongs to the N-acetylglucosamine-1-phosphate uridyltransferase family. It in the C-terminal section; belongs to the transferase hexapeptide repeat family. In terms of assembly, homotrimer. Mg(2+) is required as a cofactor.

Its subcellular location is the cytoplasm. The enzyme catalyses alpha-D-glucosamine 1-phosphate + acetyl-CoA = N-acetyl-alpha-D-glucosamine 1-phosphate + CoA + H(+). It catalyses the reaction N-acetyl-alpha-D-glucosamine 1-phosphate + UTP + H(+) = UDP-N-acetyl-alpha-D-glucosamine + diphosphate. Its pathway is nucleotide-sugar biosynthesis; UDP-N-acetyl-alpha-D-glucosamine biosynthesis; N-acetyl-alpha-D-glucosamine 1-phosphate from alpha-D-glucosamine 6-phosphate (route II): step 2/2. It participates in nucleotide-sugar biosynthesis; UDP-N-acetyl-alpha-D-glucosamine biosynthesis; UDP-N-acetyl-alpha-D-glucosamine from N-acetyl-alpha-D-glucosamine 1-phosphate: step 1/1. It functions in the pathway bacterial outer membrane biogenesis; LPS lipid A biosynthesis. In terms of biological role, catalyzes the last two sequential reactions in the de novo biosynthetic pathway for UDP-N-acetylglucosamine (UDP-GlcNAc). The C-terminal domain catalyzes the transfer of acetyl group from acetyl coenzyme A to glucosamine-1-phosphate (GlcN-1-P) to produce N-acetylglucosamine-1-phosphate (GlcNAc-1-P), which is converted into UDP-GlcNAc by the transfer of uridine 5-monophosphate (from uridine 5-triphosphate), a reaction catalyzed by the N-terminal domain. The polypeptide is Bifunctional protein GlmU (Bordetella bronchiseptica (strain ATCC BAA-588 / NCTC 13252 / RB50) (Alcaligenes bronchisepticus)).